Consider the following 387-residue polypeptide: Putative ankyrin repeat protein RBE_0984 (387 aa).

ANK repeat units follow at residues 50–79, 88–119, 123–154, 159–188, and 210–239; these read YGNT…DKDI, HRET…AINV, RKHT…VINV, HKDS…KENI, and VCKM…LKGE. Coiled-coil stretches lie at residues 251–278 and 311–352; these read FEDI…KKCE and SISA…ALEK.

In Rickettsia bellii (strain RML369-C), this protein is Putative ankyrin repeat protein RBE_0984.